Reading from the N-terminus, the 853-residue chain is Thrombospondin type-1 domain-containing protein 1 (853 aa).

A signal peptide spans 1-24 (MKPMLKDFSNLLLVVLCDYVLGEA). At 25-414 (EYLLLREPGH…QPQGPVKSNN (390 aa)) the chain is on the extracellular side. Residues Asn39, Asn53, Asn58, Asn69, Asn80, Asn135, and Asn304 are each glycosylated (N-linked (GlcNAc...) asparagine). In terms of domain architecture, TSP type-1 spans 341 to 394 (IETWGLWQPWSQCSATCGDGVRERRRVCLTSFPSRPGCPGMSLEASLCSLEECA). 3 cysteine pairs are disulfide-bonded: Cys353-Cys388, Cys357-Cys393, and Cys368-Cys378. Residues 415–435 (IVTVTGISLCLFIIIATVLIT) form a helical membrane-spanning segment. Topologically, residues 436–853 (LWRRFGRPAK…STLSVEKLVI (418 aa)) are cytoplasmic. 4 disordered regions span residues 445-518 (KCST…ESFQ), 624-650 (TLIRKSQARHVGSRGGPSERSHARNAH), 668-702 (ERSMSTLTPRQAPAYSTRTRTCEQAEDRFRPQSRG), and 714-800 (QEAS…RKDK). Phosphoserine is present on Ser464. The span at 671-686 (MSTLTPRQAPAYSTRT) shows a compositional bias: polar residues. Positions 687–697 (RTCEQAEDRFR) are enriched in basic and acidic residues. Residues 767–795 (SHKSVSRKQSSPTSPKDSYQRVSPLSPSQ) are compositionally biased toward polar residues.

As to quaternary structure, part of a complex composed of THSD1, PTK2/FAK1, TLN1 and VCL. Interacts with TLN1.

It is found in the endosome membrane. Its subcellular location is the cell junction. The protein resides in the focal adhesion. Is a positive regulator of nascent focal adhesion assembly, involved in the modulation of endothelial cell attachment to the extracellular matrix. This is Thrombospondin type-1 domain-containing protein 1 (THSD1) from Pongo abelii (Sumatran orangutan).